The primary structure comprises 205 residues: Guanylate kinase (205 aa).

One can recognise a Guanylate kinase-like domain in the interval 6–184 (GLLLVVSGPS…SAKEIEGIIS (179 aa)). 13-20 (GPSGAGKG) is a binding site for ATP.

Belongs to the guanylate kinase family.

Its subcellular location is the cytoplasm. The catalysed reaction is GMP + ATP = GDP + ADP. Functionally, essential for recycling GMP and indirectly, cGMP. The protein is Guanylate kinase of Clostridioides difficile (strain 630) (Peptoclostridium difficile).